A 2507-amino-acid polypeptide reads, in one-letter code: MEISETSHNESGPPVQENGIVEIPVEEGEEVNDEESNMETVDLGLDDSAADASSPSVFKNIDDEAPGDPSDAAKKEEDSEEIVVPSVLAPTPSQEVSPPNAIESLPPLPEGKELELEDDVTSSLPRLLSKTTLIHSNEEGADETIQRLVTVLHSNSPNTDRTQVVDNLFNLLVGGHFDQESKFVIEDAANVDHMLTLLSHCDYDLQNEIWSLFLAVMKKSNRNLEACTRVGLISKVLDILPEAPPLLADLLVQIIAALVAYSINVKQTKHLLRALKSTKEQWPPNSLKLLHVLKEMPQHDSADVFFSFPGKDQSGIILPPIKTMPYQQGWTFATWLRMEPLNSVTFEKEQPVLYSFRTSKGVGYSCHFTGNCLVVNVEKTKGKEQSRCVRAELGARKWHHIAIAHCYSRWGRSDIKCFIDGQLAETIELSWVVTSATNWDRCSIGVSADGTANSAFCGQMGAMYLFAEALTLQQANSLFCLGPVYQSTFKHDSETSLPEGYKKHLFDGHLHSSLVFAYCPKNCHGQLCLYTPPKTAASTYFVQIPHAVMKEGVEVITTHSIHKSLQSVGGIQILLPLFAQIDLPSSNDNSIDGEVCQTLLSLIALLLSSSQSSQQQLFHSKGFLIISSCLQKASPSHLSMKVLEQLIHIAKFLLRCPAGGPLLKHLFDYILFNPKLWIRARPEVQVHLYQYLATDFLANNNFSQMLRRVPTVIEMCHTLKHFYWLALPQTVSDYTIEERPENFATADIVAIRSSILTFINRIIIASAGPEEEERVRDQEVHTLLNLLATVREDDNLYDVLALVTRLLAEHPAIMIPAIDKNKALGIIFNLLAAPNELIRIPALKILGFFLSRSTLKRKTESMGNQNLFSLIGERLLSHKKVLSLPTYNVLLEILVEQMTPTFTYACHQPAQPEWKFENPHLLKVIAHVISQCEESENIVQIKKCFLIDIINLCRESKENRRTILQMSVWQDWLIGLAYVFHTTESQNEVSELVWEAFSILLHHALRNEYGGWRVWVDTLAIAHSKVSFEKFKRKLAEAKIKAERSESGGEEAKMEPTPIYRAPEFAWSDVHVRLLADLLSGIERVVDEWKVAECGISDQCNASENQVFVGNVVHVVSQLSDSLIMACGGLLPLLASATAPNNDMEIVDPCQQQLPISVSAGFLMRFARLVDTFVLASGVSFSELEQEKNMPAGGVLRQSLRISATVTVRHILASRIQQPDTPRYETNSTKKNQCIMEFVREALEKRSPDGLENVERLVQDSDITRIKGVVYRDMVEENRQAQFLALSVIYLVSVLMVSRYRDILEPPSSPSPFFDSTTQKQENSENVNSETSPENGSNGKLANGGDNLSIKNGIESNGNDGEEEENGEEGQGDDGGRIAAIKVANADMKRGDGNEYDEEELSKMHQSNGRRPSTMMPVQQTAERRAYLTTKLQTALETCAPLLREMMSDFRGYLQKTLLGTHGQEIMNDTKVLETLRNRNASVIELVMLLCSQEWQTSLQKHAGLAFIELVNEGRLMAHATRDHVLRVANEADFILNRLRAEDVSKHAQFEAESREQLAARHEEYGRCDLLIASGRLRDSINATRLLEKMSAILSDQDDSKSGTQFWKLDVWEDDSRRRKRFVPNAYGSRHEEANLPEGEKNEEPEISEQEKIRKVLKGLFSKRQNSSGSHELVDESDIDKWAQEVDPTPSSQSACFSTTAKLIAPGVVVPGTLSVTANDLFFDANESDPNYKKQCAQVLRYCEALHARWNLQEIRAIFLRRYLLQNTALELFLASRTAIMFAFDSEDAVKKVVYQLPRVGVGVKYGLPQSRKTSLMTPRQLFKHSDMCAKWQKREISNFDYLMFLNTVAGRTFNDLSQYPVFPWILTNYTSDTLDLSVASNFRDLSKPIGALSEARRKFFNDRYTSWDDDQVPAFHYGTHYSTPAFTLNWLLRVEPFASMFINLHDGKFDHPDRITHSIKDSWDRCQRDSHDVKELIPELFYLPEMFRNSSKFNLGRRADGTPVDDVVLPPWAESPEHFVLMHRQALESDLVSCQLNQWIDLIFGYKQRGAEAVRATNVFYHLTYEGTVTPKMAETPGQVAAIEQQILSFGQTPSQLLTEAHPPRHSIMSMAPTMFRRHDEDLCMMMKYISNSPVVYLAANTFHQLPQPTVVGVAQNLVFSLNKWDNSYSYGASQRSALSMDPSNAEGQVSLPLTADAQLASAASTTPVARRHLGDAFDQRLTVQCSNFVTTTDSKFIFACGYPDYSFRIVDTDSGRVRQAVYGHGDVVTCIARSETSLFSDCYVVTGSMDCTVVLWHWNGTTGFIAGEYNQPGEVPSPRSILTGHEASISALCVSAEHGLVVSGCEDGVILIHTTSSDLLRRIRGHGIVTQLSMSRECILLSLFDSKRMVTYSATAKKLDEVLVDDKIECVTVTRDGEFAVTGAVNGRINIWRMFPLTKLYTYQPLNSAVRSVAVVASHRFILGGLDSGAIVVFNADFNRWHYEYKHRYIQNTSAAKPVQQSPQK.

3 disordered regions span residues Met-1–Pro-109, Pro-1307–Arg-1377, and Ser-1629–Glu-1649. The span at Pro-24 to Asn-37 shows a compositional bias: acidic residues. Polar residues predominate over residues Thr-1317–Lys-1340. Residues Asp-1360–Gly-1372 show a composition bias toward acidic residues. In terms of domain architecture, BEACH-type PH spans Pro-1690 to Pro-1798. Positions Met-1817–Arg-2106 constitute a BEACH domain. WD repeat units follow at residues Gly-2265–Ala-2308, Gly-2326–Ile-2365, Leu-2405–Thr-2444, and Pro-2447–Glu-2486.

It belongs to the WD repeat neurobeachin family. Interacts with RII subunit of PKA. Expressed in vulval precursor cells and rectal epithelia in L2 and L3 larvae. In L4 larvae, expression is seen in intestinal epithelial cells.

The protein localises to the cytoplasm. Its subcellular location is the membrane. It localises to the nucleus. In terms of biological role, binds to type II regulatory subunits of protein kinase A and anchors/targets them to the membrane. May anchor the kinase to cytoskeletal and/or organelle-associated proteins. Regulates endosomal traffic in polarized epithelial cells such as the vulval precursor cells and intestinal cells. Thought to act as a negative regulator of lin-12 activity in vulval precursor cells. May have a role in the internalization process from basolateral surface of polarized epithelial cells. The sequence is that of Putative neurobeachin homolog (sel-2) from Caenorhabditis elegans.